Consider the following 493-residue polypeptide: Cholesteryl ester transfer protein (493 aa).

Positions 1 to 17 (MLAATVLTLALLGNVHA) are cleaved as a signal peptide. N-linked (GlcNAc...) asparagine glycans are attached at residues Asn59 and Asn105. A disulfide bridge links Cys160 with Cys201. N-linked (GlcNAc...) asparagine glycosylation is found at Asn257, Asn358, and Asn413.

This sequence belongs to the BPI/LBP/Plunc superfamily. BPI/LBP family. Probably primarily expressed in liver and adipose tissues. Detected in adrenal gland, mesenteric fat, spleen and aorta.

Its subcellular location is the secreted. The enzyme catalyses cholesteryl (9Z-octadecenoate)(in) = cholesteryl (9Z-octadecenoate)(out). The catalysed reaction is 1,2,3-tri-(9Z-octadecenoyl)-glycerol(in) = 1,2,3-tri-(9Z-octadecenoyl)-glycerol(out). It carries out the reaction cholesteryl (9Z,12Z)-octadecadienoate(in) = cholesteryl (9Z,12Z)-octadecadienoate(out). In terms of biological role, involved in the transfer of neutral lipids, including cholesteryl ester and triglyceride, among lipoprotein particles. Allows the net movement of cholesteryl ester from high density lipoproteins/HDL to triglyceride-rich very low density lipoproteins/VLDL, and the equimolar transport of triglyceride from VLDL to HDL. Regulates the reverse cholesterol transport, by which excess cholesterol is removed from peripheral tissues and returned to the liver for elimination. In Macaca fascicularis (Crab-eating macaque), this protein is Cholesteryl ester transfer protein.